Reading from the N-terminus, the 207-residue chain is Claudin-11 (207 aa).

Residue Met1 is a topological domain, cytoplasmic. Residues 2–22 (VATCLQVVGFVTSFVGWIGII) traverse the membrane as a helical segment. The Extracellular portion of the chain corresponds to 23 to 82 (VTTSTNDWVVTCSYTIPTCRKMDELGSKGLWADCVMATGLHHCKPLVDILILPGYAQACR). A helical membrane pass occupies residues 83-103 (ALMIAASVLGLPGILLLLTVL). Over 104 to 122 (PCIRMGHEPGVAKYRRAQL) the chain is Cytoplasmic. A helical membrane pass occupies residues 123-143 (AGVLLILLALCAIVATIWFPV). The Extracellular segment spans residues 144–157 (CAHREITIVSFGYS). Residues 158–178 (LYAGWIGAVMCLVGGCVIVCC) form a helical membrane-spanning segment. Residues 179–207 (SGDAQSFGENRFYYSSGSSSPTHAKSAHV) lie on the Cytoplasmic side of the membrane. Ser193, Ser194, Ser197, and Ser198 each carry phosphoserine.

This sequence belongs to the claudin family. In terms of assembly, interacts with tetraspanin-3/TSPAN3. Interacts with OCLN.

The protein localises to the cell junction. The protein resides in the tight junction. Its subcellular location is the cell membrane. Plays a major role in tight junction-specific obliteration of the intercellular space, through calcium-independent cell-adhesion activity. This is Claudin-11 (Cldn11) from Rattus norvegicus (Rat).